The chain runs to 193 residues: Anthranilate synthase component 2 (193 aa).

Residues 3-193 form the Glutamine amidotransferase type-1 domain; it reads NILFLDNFDS…QQSIEWLLNR (191 aa). Residue 57-59 coordinates L-glutamine; sequence GPG. C84 (nucleophile; for GATase activity) is an active-site residue. Residues Q88 and 134–135 each bind L-glutamine; that span reads SL. Active-site for GATase activity residues include H170 and E172.

Heterotetramer consisting of two non-identical subunits: a beta subunit (TrpG) and a large alpha subunit (TrpE).

It carries out the reaction chorismate + L-glutamine = anthranilate + pyruvate + L-glutamate + H(+). Its pathway is amino-acid biosynthesis; L-tryptophan biosynthesis; L-tryptophan from chorismate: step 1/5. Its function is as follows. Part of a heterotetrameric complex that catalyzes the two-step biosynthesis of anthranilate, an intermediate in the biosynthesis of L-tryptophan. In the first step, the glutamine-binding beta subunit (TrpG) of anthranilate synthase (AS) provides the glutamine amidotransferase activity which generates ammonia as a substrate that, along with chorismate, is used in the second step, catalyzed by the large alpha subunit of AS (TrpE) to produce anthranilate. In the absence of TrpG, TrpE can synthesize anthranilate directly from chorismate and high concentrations of ammonia. The sequence is that of Anthranilate synthase component 2 (trpG) from Haemophilus influenzae (strain ATCC 51907 / DSM 11121 / KW20 / Rd).